Consider the following 371-residue polypeptide: Probable G protein-coupled receptor 85 (371 aa).

Over Met1–Thr26 the chain is Extracellular. Asn3 is a glycosylation site (N-linked (GlcNAc...) asparagine). A helical membrane pass occupies residues Ser27 to Val47. Residues Lys48–Tyr58 lie on the Cytoplasmic side of the membrane. Residues Phe59–Phe79 traverse the membrane as a helical segment. Topologically, residues Thr80–Lys96 are extracellular. The N-linked (GlcNAc...) asparagine glycan is linked to Asn84. Cys95 and Cys173 form a disulfide bridge. The chain crosses the membrane as a helical span at residues Val97–Ser117. The Cytoplasmic portion of the chain corresponds to Val118–Thr138. A helical transmembrane segment spans residues Cys139 to Leu159. At Asp160 to Met189 the chain is on the extracellular side. A glycan (N-linked (GlcNAc...) asparagine) is linked at Asn183. A helical transmembrane segment spans residues Leu190 to Val210. At His211–Met287 the chain is on the cytoplasmic side. A helical membrane pass occupies residues Phe288–Trp308. Topologically, residues Arg309 to Tyr321 are extracellular. Residues Leu322–Phe342 form a helical membrane-spanning segment. At Ser343 to Ile371 the chain is on the cytoplasmic side.

Belongs to the G-protein coupled receptor 1 family.

It localises to the cell membrane. Orphan receptor. This is Probable G protein-coupled receptor 85 (gpr85) from Danio rerio (Zebrafish).